A 182-amino-acid chain; its full sequence is Isopentenyl-diphosphate Delta-isomerase (182 aa).

Positions 25 and 32 each coordinate Mn(2+). Residues 30 to 164 form the Nudix hydrolase domain; sequence RLHLAFSSWL…PWAFSPWMVM (135 aa). The active site involves C67. Position 67 (C67) interacts with Mg(2+). H69 contacts Mn(2+). E87 is a binding site for Mg(2+). Mn(2+) is bound by residues E114 and E116. E116 is an active-site residue.

It belongs to the IPP isomerase type 1 family. As to quaternary structure, homodimer. Mg(2+) is required as a cofactor. Requires Mn(2+) as cofactor.

The protein resides in the cytoplasm. It catalyses the reaction isopentenyl diphosphate = dimethylallyl diphosphate. It functions in the pathway isoprenoid biosynthesis; dimethylallyl diphosphate biosynthesis; dimethylallyl diphosphate from isopentenyl diphosphate: step 1/1. Catalyzes the 1,3-allylic rearrangement of the homoallylic substrate isopentenyl (IPP) to its highly electrophilic allylic isomer, dimethylallyl diphosphate (DMAPP). This chain is Isopentenyl-diphosphate Delta-isomerase, found in Shigella dysenteriae serotype 1 (strain Sd197).